Consider the following 225-residue polypeptide: Ribosomal RNA large subunit methyltransferase E (225 aa).

The S-adenosyl-L-methionine site is built by Gly64, Trp66, Asp93, Asp109, and Asp138. The Proton acceptor role is filled by Lys178.

Belongs to the class I-like SAM-binding methyltransferase superfamily. RNA methyltransferase RlmE family.

The protein resides in the cytoplasm. The catalysed reaction is uridine(2552) in 23S rRNA + S-adenosyl-L-methionine = 2'-O-methyluridine(2552) in 23S rRNA + S-adenosyl-L-homocysteine + H(+). Functionally, specifically methylates the uridine in position 2552 of 23S rRNA at the 2'-O position of the ribose in the fully assembled 50S ribosomal subunit. This Cupriavidus pinatubonensis (strain JMP 134 / LMG 1197) (Cupriavidus necator (strain JMP 134)) protein is Ribosomal RNA large subunit methyltransferase E.